The chain runs to 2074 residues: Cell adhesion molecule Dscam2 (2074 aa).

The N-terminal stretch at 1-21 is a signal peptide; it reads MWISSRFFVILLLLNLDNTCS. Topologically, residues 22 to 1619 are extracellular; the sequence is EPFEAHLRGP…QTTVIFANIN (1598 aa). Ig-like C2-type domains are found at residues 31–120, 238–326, 330–417, 422–516, 521–607, 612–698, 707–802, and 805–902; these read PGFV…RIVS, PSVV…LRLT, PIQV…AELQ, PPVL…ARLN, PYIR…GEVT, PSIE…IKYT, PRWI…LKVN, and PYFS…LQVQ. Intrachain disulfides connect cysteine 53-cysteine 109, cysteine 259-cysteine 310, cysteine 352-cysteine 400, cysteine 444-cysteine 500, cysteine 541-cysteine 590, cysteine 633-cysteine 686, cysteine 728-cysteine 783, and cysteine 826-cysteine 884. 4 consecutive Fibronectin type-III domains span residues 907 to 1003, 1008 to 1108, 1113 to 1211, and 1215 to 1311; these read PPSV…TEPQ, PPLS…TMED, PPED…SEED, and APAD…TNRI. The 89-residue stretch at 1312–1400 folds into the Ig-like C2-type 9 domain; the sequence is PARIISFGGP…DRLTHTLIVQ (89 aa). Cysteines 1334 and 1382 form a disulfide. 2 consecutive Fibronectin type-III domains span residues 1402 to 1495 and 1496 to 1595; these read PPTA…TQGQ and SPGH…TKDG. Residues 1620–1640 form a helical membrane-spanning segment; that stretch reads LLIPTIAAVSGMFCTIIMIIV. Residues 1641–2074 lie on the Cytoplasmic side of the membrane; the sequence is CYRHMLKNAP…KFFTAPTLPK (434 aa). Disordered stretches follow at residues 1739-1766, 1778-1917, 1936-1974, and 2011-2074; these read EGCS…HQRP, PFHN…KSIS, SPSI…SLKQ, and PSSQ…TLPK. Over residues 1757–1766 the composition is skewed to basic residues; the sequence is THHHHHHQRP. Over residues 1831 to 1846 the composition is skewed to polar residues; the sequence is AQSSTSSDLSPMSEQK. Over residues 1848–1858 the composition is skewed to basic residues; that stretch reads LPRRGRSRYHH. Residues 1859-1868 are compositionally biased toward polar residues; that stretch reads QQYQFSTNTT. Low complexity-rich tracts occupy residues 1875–1903, 1942–1974, and 2036–2051; these read NKMN…SNSN, QQQK…SLKQ, and SQQS…QQHP. Over residues 2055–2066 the composition is skewed to polar residues; sequence LNPSTAMLSSKF.

It localises to the membrane. Cell adhesion molecule. This Drosophila melanogaster (Fruit fly) protein is Cell adhesion molecule Dscam2 (Dscam2).